We begin with the raw amino-acid sequence, 338 residues long: Glyceraldehyde-3-phosphate dehydrogenase GAPC2, cytosolic (338 aa).

NAD(+) contacts are provided by residues 15-16, Asp37, and Arg84; that span reads RI. 155–157 contacts D-glyceraldehyde 3-phosphate; the sequence is SCT. Cys156 functions as the Nucleophile in the catalytic mechanism. An S-glutathionyl cysteine; transient; alternate modification is found at Cys156. At Cys156 the chain carries S-nitrosocysteine; transient; alternate. Cys160 is modified (S-nitrosocysteine; transient). D-glyceraldehyde 3-phosphate-binding positions include Thr186, 215-216, and Arg238; that span reads TG. Residue Asn320 coordinates NAD(+).

Belongs to the glyceraldehyde-3-phosphate dehydrogenase family. Homotetramer. Interacts with PLDDELTA. Binds to DPB3-1/NF-YC10 in response to heat-stress; this interaction promotes DPB3-1/NF-YC10 DNA-binding ability to its target promoter. In terms of processing, S-glutathionylation at Cys-156 in the presence of oxidized glutathione (GSSG). S-nitrosylation at Cys-156 and Cys-160 in the presence of S-nitrosoglutathione (GSNO) or sodium nitroprusside (SNP). These reactions may be both a protective mechanism against irreversible oxidation and a mean to store inhibited enzyme in a recoverable form.

The protein localises to the cytoplasm. It localises to the nucleus. The enzyme catalyses D-glyceraldehyde 3-phosphate + phosphate + NAD(+) = (2R)-3-phospho-glyceroyl phosphate + NADH + H(+). The protein operates within carbohydrate degradation; glycolysis; pyruvate from D-glyceraldehyde 3-phosphate: step 1/5. With respect to regulation, inhibition by oxidized glutathione (GSSG), S-nitrosoglutathione (GSNO) and hydrogen peroxide. Its function is as follows. Key enzyme in glycolysis that catalyzes the first step of the pathway by converting D-glyceraldehyde 3-phosphate (G3P) into 3-phospho-D-glyceroyl phosphate. Essential for the maintenance of cellular ATP levels and carbohydrate metabolism. Binds DNA in vitro. Together with DNA polymerase II subunit B3-1 (DPB3-1) and GAPC1, enhances heat tolerance and promotes the expression of heat-inducible genes. This Arabidopsis thaliana (Mouse-ear cress) protein is Glyceraldehyde-3-phosphate dehydrogenase GAPC2, cytosolic.